A 675-amino-acid chain; its full sequence is Myosin-binding protein 3 (675 aa).

A helical transmembrane segment spans residues 17–37 (ITVILVYAFLEWLLMFFIFLN). Disordered stretches follow at residues 225-274 (LRSI…EEET) and 286-315 (SKNF…TPTS). Residues 238–251 (AKSRVSEDEQRNDD) are compositionally biased toward basic and acidic residues. Residues 355 to 453 (RTIERLRETV…QLQRELEVYR (99 aa)) enclose the GTD-binding domain. The segment covering 474-496 (CEADDDDKEEENREEDNSSEMDV) has biased composition (acidic residues). Disordered stretches follow at residues 474–497 (CEAD…MDVD), 542–565 (DKES…GHGG), and 582–605 (AENE…GSDS). Residues 596-605 (SDEKNFGSDS) show a composition bias toward basic and acidic residues. Residues 605-633 (SEKLEIIKQVDSVYERLQELETDGEFLKN) adopt a coiled-coil conformation.

In terms of assembly, interacts with myosin XI-K.

The protein localises to the membrane. In terms of biological role, membrane-anchored myosin receptors that define a distinct, plant-specific transport vesicle compartment. The chain is Myosin-binding protein 3 from Arabidopsis thaliana (Mouse-ear cress).